A 234-amino-acid polypeptide reads, in one-letter code: Sugar fermentation stimulation protein homolog (234 aa).

The protein belongs to the SfsA family.

The chain is Sugar fermentation stimulation protein homolog from Shewanella baltica (strain OS195).